Consider the following 1872-residue polypeptide: Plexin-A3 (1872 aa).

An N-terminal signal peptide occupies residues 1 to 19 (MPTVCLLPLLFFTIGGCLG). The Sema domain maps to 20–489 (SSRPFRTFVV…SEKQVSQLPV (470 aa)). Residues 20-1220 (SSRPFRTFVV…ITADRALTLP (1201 aa)) are Extracellular-facing. N-linked (GlcNAc...) asparagine glycosylation occurs at Asn-60. Disulfide bonds link Cys-78-Cys-87, Cys-113-Cys-121, Cys-267-Cys-388, Cys-283-Cys-339, Cys-357-Cys-376, Cys-492-Cys-509, Cys-498-Cys-540, Cys-501-Cys-518, and Cys-512-Cys-524. Asn-549 carries an N-linked (GlcNAc...) asparagine glycan. A disulfide bridge links Cys-575 with Cys-595. 4 consecutive IPT/TIG domains span residues 841–934 (PRIT…YSFV), 936–1021 (PTFD…YTYT), 1024–1123 (PTVT…FTYY), and 1126–1212 (PSFE…LHIT). N-linked (GlcNAc...) asparagine glycosylation occurs at Asn-1163. The chain crosses the membrane as a helical span at residues 1221–1241 (AMVGLAAGGGLLLLAITVVLV). Residues 1240 to 1294 (LVAYKRKTQDADRTLKRLQLQMDNLESRVALECKEAFAELQTDINELTNHMDGVQ) are a coiled coil. Topologically, residues 1242–1872 (AYKRKTQDAD…QIITLVSSSS (631 aa)) are cytoplasmic. The residue at position 1597 (Ser-1597) is a Phosphoserine.

The protein belongs to the plexin family. As to expression, detected in embryonic hindbrain, spinal cord, dorsal root ganglion, trigeminal ganglion and superior cervical ganglion. In newborns, detected throughout all layers of the hippocampus.

It localises to the cell membrane. Coreceptor for SEMA3A and SEMA3F. Necessary for signaling by class 3 semaphorins and subsequent remodeling of the cytoskeleton. Plays a role in axon guidance in the developing nervous system. Regulates the migration of sympathetic neurons, but not of neural crest precursors. Required for normal dendrite spine morphology in pyramidal neurons. May play a role in regulating semaphorin-mediated programmed cell death in the developing nervous system. Class 3 semaphorins bind to a complex composed of a neuropilin and a plexin. The plexin modulates the affinity of the complex for specific semaphorins, and its cytoplasmic domain is required for the activation of down-stream signaling events in the cytoplasm. The sequence is that of Plexin-A3 (Plxna3) from Mus musculus (Mouse).